A 257-amino-acid polypeptide reads, in one-letter code: tRNA (guanine-N(1)-)-methyltransferase (257 aa).

Residues glycine 117 and 137–142 contribute to the S-adenosyl-L-methionine site; that span reads LGDFVL.

Belongs to the RNA methyltransferase TrmD family. As to quaternary structure, homodimer.

Its subcellular location is the cytoplasm. The catalysed reaction is guanosine(37) in tRNA + S-adenosyl-L-methionine = N(1)-methylguanosine(37) in tRNA + S-adenosyl-L-homocysteine + H(+). Functionally, specifically methylates guanosine-37 in various tRNAs. In Bordetella parapertussis (strain 12822 / ATCC BAA-587 / NCTC 13253), this protein is tRNA (guanine-N(1)-)-methyltransferase.